Here is a 145-residue protein sequence, read N- to C-terminus: MDESKKNERLQQLTDIQYNVTQKAGTERPFQNEFYDNVAKGIYVDIVSGKPLFSSNDQYDAGCGWPSFTKPIDEAEVIEHRDLTHGMIRTEVKSADADSHLGHVFPDGPQDKGGLRYCINSAALRFIPVDKLEEEGYQAYKKIFE.

One can recognise a MsrB domain in the interval 6 to 129 (KNERLQQLTD…NSAALRFIPV (124 aa)). C118 functions as the Nucleophile in the catalytic mechanism.

Belongs to the MsrB Met sulfoxide reductase family.

It catalyses the reaction L-methionyl-[protein] + [thioredoxin]-disulfide + H2O = L-methionyl-(R)-S-oxide-[protein] + [thioredoxin]-dithiol. In Listeria monocytogenes serotype 4a (strain HCC23), this protein is Peptide methionine sulfoxide reductase MsrB.